Consider the following 154-residue polypeptide: Myoglobin (154 aa).

One can recognise a Globin domain in the interval 2–148 (GLSDGEWQLV…FRKDMASNYK (147 aa)). Ser-4 is subject to Phosphoserine. His-65 contributes to the nitrite binding site. His-65 lines the O2 pocket. Position 68 is a phosphothreonine (Thr-68). His-94 contacts heme b.

The protein belongs to the globin family. In terms of assembly, monomeric.

The protein resides in the cytoplasm. It localises to the sarcoplasm. The enzyme catalyses Fe(III)-heme b-[protein] + nitric oxide + H2O = Fe(II)-heme b-[protein] + nitrite + 2 H(+). The catalysed reaction is H2O2 + AH2 = A + 2 H2O. In terms of biological role, monomeric heme protein which primary function is to store oxygen and facilitate its diffusion within muscle tissues. Reversibly binds oxygen through a pentacoordinated heme iron and enables its timely and efficient release as needed during periods of heightened demand. Depending on the oxidative conditions of tissues and cells, and in addition to its ability to bind oxygen, it also has a nitrite reductase activity whereby it regulates the production of bioactive nitric oxide. Under stress conditions, like hypoxia and anoxia, it also protects cells against reactive oxygen species thanks to its pseudoperoxidase activity. The chain is Myoglobin (MB) from Gorilla gorilla beringei (Mountain gorilla).